Reading from the N-terminus, the 419-residue chain is L-rhamnose isomerase (419 aa).

Mn(2+)-binding residues include H262, D294, and D296.

It belongs to the rhamnose isomerase family. As to quaternary structure, homotetramer. Mn(2+) is required as a cofactor.

It localises to the cytoplasm. The enzyme catalyses L-rhamnopyranose = L-rhamnulose. It participates in carbohydrate degradation; L-rhamnose degradation; glycerone phosphate from L-rhamnose: step 1/3. In terms of biological role, catalyzes the interconversion of L-rhamnose and L-rhamnulose. The chain is L-rhamnose isomerase from Salmonella typhi.